The primary structure comprises 480 residues: MKLEPLFNLDPNTKVRTRFAPSPTGYLHVGGARTALYSWLYAKHNQGEFVLRIEDTDLERSTPEATAAILEGMEWLNLAWEHGPYFQTKRFERYNQVIDQMIEQGLAYRCYCTKERLEDLRHSQEQNKQKPRYDRYCLHQSEYPVDAPHVVRFKNPTEGTVVFDDAVRGRIEISNRELDDLIIRRTDGSPTYNFCVVVDDWDMGITHVVRGEDHINNTPRQINILKALGAPIPTYAHVSMINGDDGQKLSKRHGAVSVMQYRDEGYLPEALINYLVRLGWGHGDQEIFSREEMIALFDIHSVSKSASAFNTEKLQWLNQHYMRSLPVEQVATHLEWHMKKHGIDYSNGPNLAEIIPVLSERCKTLKELAISSRYFYQDVENYDEKAVAKNFKPEAIKPLAKLAEKLTALSDWTVENIHEVMSQTAQELDIGMGKVGMPFRLAVTGLGQSPSMDITAKLVGKDRTISRINNAIAFIHTQNV.

Positions 21–31 (PSPTGYLHVGG) match the 'HIGH' region motif. Residues Cys110, Cys112, Cys137, and His139 each contribute to the Zn(2+) site. The short motif at 248 to 252 (KLSKR) is the 'KMSKS' region element. Lys251 lines the ATP pocket.

The protein belongs to the class-I aminoacyl-tRNA synthetase family. Glutamate--tRNA ligase type 1 subfamily. In terms of assembly, monomer. The cofactor is Zn(2+).

It localises to the cytoplasm. It carries out the reaction tRNA(Glu) + L-glutamate + ATP = L-glutamyl-tRNA(Glu) + AMP + diphosphate. Catalyzes the attachment of glutamate to tRNA(Glu) in a two-step reaction: glutamate is first activated by ATP to form Glu-AMP and then transferred to the acceptor end of tRNA(Glu). In Histophilus somni (strain 129Pt) (Haemophilus somnus), this protein is Glutamate--tRNA ligase.